A 499-amino-acid polypeptide reads, in one-letter code: Probable cytosol aminopeptidase (499 aa).

Mn(2+) is bound by residues K271 and D276. K283 is an active-site residue. Residues D294, D353, and E355 each coordinate Mn(2+). R357 is an active-site residue.

This sequence belongs to the peptidase M17 family. Requires Mn(2+) as cofactor.

It is found in the cytoplasm. The catalysed reaction is Release of an N-terminal amino acid, Xaa-|-Yaa-, in which Xaa is preferably Leu, but may be other amino acids including Pro although not Arg or Lys, and Yaa may be Pro. Amino acid amides and methyl esters are also readily hydrolyzed, but rates on arylamides are exceedingly low.. It catalyses the reaction Release of an N-terminal amino acid, preferentially leucine, but not glutamic or aspartic acids.. Presumably involved in the processing and regular turnover of intracellular proteins. Catalyzes the removal of unsubstituted N-terminal amino acids from various peptides. The sequence is that of Probable cytosol aminopeptidase from Bordetella bronchiseptica (strain ATCC BAA-588 / NCTC 13252 / RB50) (Alcaligenes bronchisepticus).